Here is a 64-residue protein sequence, read N- to C-terminus: uncharacterized protein (64 aa).

Belongs to the orthopoxviruses VACWR006 protein family.

This is an uncharacterized protein from Vaccinia virus (strain Western Reserve) (VACV).